We begin with the raw amino-acid sequence, 103 residues long: Cell division topological specificity factor (103 aa).

The protein belongs to the MinE family.

Functionally, prevents the cell division inhibition by proteins MinC and MinD at internal division sites while permitting inhibition at polar sites. This ensures cell division at the proper site by restricting the formation of a division septum at the midpoint of the long axis of the cell. This is Cell division topological specificity factor from Prochlorococcus marinus (strain MIT 9211).